The following is a 610-amino-acid chain: 6(G)-fructosyltransferase (610 aa).

The Cytoplasmic portion of the chain corresponds to 1-20 (MATSLQAPILGSRPPRRTLR). Residues 21–38 (FLSFALFSALVLVVASFS) form a helical; Signal-anchor for type II membrane protein membrane-spanning segment. Over 39–610 (SRKSESGSGL…NQYYPFTSSN (572 aa)) the chain is Vacuolar. Residues 79–82 (YMND), Q98, W106, 141–142 (WT), and 207–208 (RD) each bind substrate. D82 is an active-site residue. N215, N229, and N248 each carry an N-linked (GlcNAc...) asparagine glycan. E266 is a substrate binding site. N459 carries N-linked (GlcNAc...) asparagine glycosylation. Cysteines 460 and 508 form a disulfide. N-linked (GlcNAc...) asparagine glycans are attached at residues N580 and N597.

It belongs to the glycosyl hydrolase 32 family. Might be processed in two N-terminal and C-terminal proteolytic fragments.

The protein localises to the vacuole membrane. The catalysed reaction is [1-beta-D-fructofuranosyl-(2-&gt;1)-]m+1 alpha-D-glucopyranoside + [1-beta-D-fructofuranosyl-(2-&gt;1)-]n+1 alpha-D-glucopyranoside = [1-beta-D-fructofuranosyl-(2-&gt;1)-]m alpha-D-glucopyranoside + [1-beta-D-fructofuranosyl-(2-&gt;1)-]n+1 beta-D-fructofuranosyl-(2-&gt;6)-alpha-D-glucopyranoside (m &gt; 0, n &gt;= 0).. Functionally, involved in the synthesis of fructan of the inulin neoseries. Has no 1-FFT activity. In Asparagus officinalis (Garden asparagus), this protein is 6(G)-fructosyltransferase (FT1).